Here is a 113-residue protein sequence, read N- to C-terminus: T cell receptor alpha variable 36/delta variable 7 (113 aa).

An N-terminal signal peptide occupies residues 1-21 (MMKCPQALLAIFWLLLSWVSS). In terms of domain architecture, Ig-like spans 23–113 (DKVVQSPLSL…DSAIYLCAVE (91 aa)). 2 N-linked (GlcNAc...) asparagine glycosylation sites follow: Asn43 and Asn96. The cysteines at positions 44 and 110 are disulfide-linked.

As to quaternary structure, alpha-beta TR is a heterodimer composed of an alpha and beta chain; disulfide-linked. The alpha-beta TR is associated with the transmembrane signaling CD3 coreceptor proteins to form the TR-CD3 (TcR or TCR). The assembly of alpha-beta TR heterodimers with CD3 occurs in the endoplasmic reticulum where a single alpha-beta TR heterodimer associates with one CD3D-CD3E heterodimer, one CD3G-CD3E heterodimer and one CD247 homodimer forming a stable octameric structure. CD3D-CD3E and CD3G-CD3E heterodimers preferentially associate with TR alpha and TR beta chains, respectively. The association of the CD247 homodimer is the last step of TcR assembly in the endoplasmic reticulum and is required for transport to the cell surface.

It localises to the cell membrane. Functionally, v region of the variable domain of T cell receptor (TR) alpha chain that participates in the antigen recognition. Alpha-beta T cell receptors are antigen specific receptors which are essential to the immune response and are present on the cell surface of T lymphocytes. Recognize peptide-major histocompatibility (MH) (pMH) complexes that are displayed by antigen presenting cells (APC), a prerequisite for efficient T cell adaptive immunity against pathogens. Binding of alpha-beta TR to pMH complex initiates TR-CD3 clustering on the cell surface and intracellular activation of LCK that phosphorylates the ITAM motifs of CD3G, CD3D, CD3E and CD247 enabling the recruitment of ZAP70. In turn ZAP70 phosphorylates LAT, which recruits numerous signaling molecules to form the LAT signalosome. The LAT signalosome propagates signal branching to three major signaling pathways, the calcium, the mitogen-activated protein kinase (MAPK) kinase and the nuclear factor NF-kappa-B (NF-kB) pathways, leading to the mobilization of transcription factors that are critical for gene expression and essential for T cell growth and differentiation. The T cell repertoire is generated in the thymus, by V-(D)-J rearrangement. This repertoire is then shaped by intrathymic selection events to generate a peripheral T cell pool of self-MH restricted, non-autoaggressive T cells. Post-thymic interaction of alpha-beta TR with the pMH complexes shapes TR structural and functional avidity. In Homo sapiens (Human), this protein is T cell receptor alpha variable 36/delta variable 7.